Consider the following 742-residue polypeptide: F-box only protein 30 (742 aa).

Residues 49 to 108 (EHRLLCPFERVPCLNSNFGCPFTLARNKVAEHLEMCPASVVCCTMEWNRWPVSYSDRKSY) form a TRAF-type zinc finger. Residues 214-242 (SLQGTTNEMDEESNRESSQDRNAKDQDHL) are disordered. Over residues 225–242 (ESNRESSQDRNAKDQDHL) the composition is skewed to basic and acidic residues. Ser379 is subject to Phosphoserine. The region spanning 607 to 653 (SDHLSSLPFEVLQHIAGFLDGFSLCQLACVSRLMRDICGSLLQSRGM) is the F-box domain.

In terms of assembly, part of a SCF (SKP1-cullin-F-box) protein ligase complex. Interacts with SKP1, CUL1 and RBX1/ROC1. Post-translationally, auto-ubiquitinated. May be neddylated. Neddylation may be required for E3 ligase activity.

It participates in protein modification; protein ubiquitination. In terms of biological role, substrate-recognition component of the SCF (SKP1-CUL1-F-box protein)-type E3 ubiquitin ligase complex. Required for muscle atrophy following denervation. The protein is F-box only protein 30 (Fbxo30) of Rattus norvegicus (Rat).